The chain runs to 182 residues: Inosine/xanthosine triphosphatase (182 aa).

D38 and E68 together coordinate Mg(2+). 68–69 (EA) contributes to the substrate binding site.

It belongs to the YjjX NTPase family. Homodimer. Requires Mg(2+) as cofactor. Mn(2+) serves as cofactor.

The enzyme catalyses XTP + H2O = XDP + phosphate + H(+). It catalyses the reaction ITP + H2O = IDP + phosphate + H(+). Its function is as follows. Phosphatase that hydrolyzes non-canonical purine nucleotides such as XTP and ITP to their respective diphosphate derivatives. Probably excludes non-canonical purines from DNA/RNA precursor pool, thus preventing their incorporation into DNA/RNA and avoiding chromosomal lesions. This chain is Inosine/xanthosine triphosphatase, found in Erwinia tasmaniensis (strain DSM 17950 / CFBP 7177 / CIP 109463 / NCPPB 4357 / Et1/99).